Here is a 525-residue protein sequence, read N- to C-terminus: Mitochondrial-processing peptidase subunit alpha (525 aa).

The N-terminal 33 residues, 1 to 33 (MAAVVLAATRLLRGSGSWGCSRLRFGPPAYRRF), are a transit peptide targeting the mitochondrion. Position 64 is an N6-succinyllysine (Lys-64). At Lys-299 the chain carries N6-acetyllysine.

Belongs to the peptidase M16 family. In terms of assembly, heterodimer of PMPCA (alpha) and PMPCB (beta) subunits, forming the mitochondrial processing protease (MPP) in which PMPCA is involved in substrate recognition and binding and PMPCB is the catalytic subunit. As to expression, ubiquitously expressed with highest expression in fetal tissues and adult brain, cerebellum and cerebellar vermis.

It is found in the mitochondrion matrix. Its subcellular location is the mitochondrion inner membrane. Its function is as follows. Substrate recognition and binding subunit of the essential mitochondrial processing protease (MPP), which cleaves the mitochondrial sequence off newly imported precursors proteins. The protein is Mitochondrial-processing peptidase subunit alpha (PMPCA) of Homo sapiens (Human).